The sequence spans 134 residues: Lymphocyte antigen 6 complex locus protein G6d (134 aa).

An N-terminal signal peptide occupies residues 1 to 19 (MNSQLIGILFSALLGAALG). One can recognise a UPAR/Ly6 domain in the interval 22-121 (MRCYDCGGGP…ASSSTPLCIL (100 aa)). Cystine bridges form between C24–C48, C27–C35, C42–C76, C82–C101, and C102–C107. O-linked (GalNAc...) threonine glycosylation occurs at T68. N108 carries GPI-anchor amidated asparagine lipidation. Residues 109–134 (GAVASSSTPLCILAAVTTLAWLLSGQ) constitute a propeptide, removed in mature form.

As to quaternary structure, homodimer. In terms of processing, O-glycosylated.

It is found in the cell membrane. The polypeptide is Lymphocyte antigen 6 complex locus protein G6d (Ly6g6d) (Rattus norvegicus (Rat)).